The primary structure comprises 456 residues: MASFPPSLVFTVRRKEPTLVLPSKPTPRELKQLSDIDDQEGFRFQVPVIMFYKRKLYMEGEDPVKVIREALAEALVFYYPFAGRLIEGPNRKLVVDCTSEGVLFIEADADIELNQLIGDTIDPGTYLDELLHDVPGSEGIVGCPLLLIQVTRFRCGGWAFAIRLNHTMSDTLGLVQFLTTIAEFTRGAEDAPSVPPVWQREFLAARQPPFIPFQHHEYEQVIDTIPDDNKKSMTHKSFFFGPKEIRAIRSHLPHHHRSTSSTFDVLTACLWRCRTCALGLDPQMTVRISCAANGRGKHGLHVPRGYYGNVSAFPATVLRAGIISTSPLEYAMEGVKKAKAIMTGEYLRSVADLMVTKGRPRYTVAGNYIVSDMTRVGLDTIDFGWGKPVYGGPARAFPLISFYGRFKDNKGEDGTVVLICLPEAALERFQEELKKMTGEHVDGPFDYKPIKVVSKL.

Residues histidine 166 and aspartate 382 each act as proton acceptor in the active site.

The protein belongs to the plant acyltransferase family. As to expression, expressed in fruit.

Involved in the biosynthesis of volatile esters which confer kiwifruit flavor. Alcohol acyl transferase that can use a wide range of alcohols as substrate to produce esters. In Actinidia deliciosa (Kiwi), this protein is Alcohol acyltransferase 17.